The sequence spans 268 residues: Virulence plasmid ParA family protein pGP5-D (268 aa).

13 to 20 (FKGGTGKT) contributes to the ATP binding site.

Belongs to the ParA family.

The protein is Virulence plasmid ParA family protein pGP5-D of Chlamydia muridarum (strain MoPn / Nigg).